Reading from the N-terminus, the 382-residue chain is Pregnancy-associated glycoprotein 1 (382 aa).

An N-terminal signal peptide occupies residues 1 to 15 (MKWLVLLGLVAFSEC). The propeptide at 16 to 53 (IVKIPLRRVKTMRNTLSGKKMLNSFLKEHAYRLSQISF) is activation peptide. N-linked (GlcNAc...) asparagine glycans are attached at residues Asn-57 and Asn-74. The 309-residue stretch at 71-379 (YVGNITIGTP…DRGNDRIGLA (309 aa)) folds into the Peptidase A1 domain. An intrachain disulfide couples Cys-102 to Cys-110. A glycan (N-linked (GlcNAc...) asparagine) is linked at Asn-128. 2 cysteine pairs are disulfide-bonded: Cys-263/Cys-267 and Cys-305/Cys-339.

It belongs to the peptidase A1 family. In terms of tissue distribution, trophoblast and placental tissue. Produced specifically in the invasive binucleate cells of the placenta.

It localises to the secreted. Its subcellular location is the extracellular space. Its function is as follows. Has no proteolytic activity. This Ovis aries (Sheep) protein is Pregnancy-associated glycoprotein 1.